The sequence spans 64 residues: MTTSTNRITIEQVKSPIGRPGSQKATLIGLGLNKIGRRSSLEDSPAVRGMIAKVAHLIRVIDGQ.

This sequence belongs to the universal ribosomal protein uL30 family. As to quaternary structure, part of the 50S ribosomal subunit.

The polypeptide is Large ribosomal subunit protein uL30 (Beijerinckia indica subsp. indica (strain ATCC 9039 / DSM 1715 / NCIMB 8712)).